Reading from the N-terminus, the 350-residue chain is Serine/arginine-rich splicing factor RS40 (350 aa).

2 RRM domains span residues 2–74 (KPVF…WTKS) and 97–168 (KTLF…YAVK). 2 stretches are compositionally biased toward basic and acidic residues: residues 73-82 (KSERGGDKRS) and 167-187 (VKDD…DRSP). Disordered stretches follow at residues 73–94 (KSER…SSMR) and 167–350 (VKDD…PADE). Ser-193, Ser-195, and Ser-211 each carry phosphoserine. Basic and acidic residues-rich tracts occupy residues 216–227 (YRKERTSPDYGR) and 240–255 (GSPE…DSPR). A phosphoserine mark is found at Ser-241, Ser-262, Ser-278, Ser-298, Ser-308, Ser-335, and Ser-340. Basic and acidic residues predominate over residues 272 to 289 (NKRERMSPNHSPFKKESP). Residues 299–308 (PIERRERSRS) show a composition bias toward basic and acidic residues.

The protein belongs to the splicing factor SR family. RS subfamily. Component of the spliceosome. Interacts with SNRNP35. Interacts with CYP59. Interacts with RCF3 and CPL1. Interacts with DRB1/HYL1 and SE. As to expression, highly expressed in roots and flowers. A presumably longer alternatively spliced form is found in leaves, stems and flowers.

It localises to the nucleus. It is found in the nucleus speckle. Required for constitutive and alternative pre-mRNA splicing. Involved in primary miRNA processing and pri-miRNA biogenesis. Binds both intronless and intron-containing pri-miRNAs. In Arabidopsis thaliana (Mouse-ear cress), this protein is Serine/arginine-rich splicing factor RS40 (RS40).